Consider the following 430-residue polypeptide: Protein arginine methyltransferase NDUFAF7, mitochondrial (430 aa).

The transit peptide at 1–31 directs the protein to the mitochondrion; that stretch reads MSGLARLRKTAFLMVSASANCRIQRYQSSRT.

This sequence belongs to the NDUFAF7 family.

The protein resides in the mitochondrion. The catalysed reaction is L-arginyl-[protein] + 2 S-adenosyl-L-methionine = N(omega),N(omega)'-dimethyl-L-arginyl-[protein] + 2 S-adenosyl-L-homocysteine + 2 H(+). Its function is as follows. Arginine methyltransferase involved in the assembly or stability of mitochondrial NADH:ubiquinone oxidoreductase complex (complex I). Acts by mediating symmetric dimethylation of 'Arg-118' of ndufs2 after it assembles into the complex I, stabilizing the early intermediate complex. This is Protein arginine methyltransferase NDUFAF7, mitochondrial from Xenopus tropicalis (Western clawed frog).